We begin with the raw amino-acid sequence, 55 residues long: Large ribosomal subunit protein bL33A (55 aa).

Belongs to the bacterial ribosomal protein bL33 family.

This is Large ribosomal subunit protein bL33A from Salinispora tropica (strain ATCC BAA-916 / DSM 44818 / JCM 13857 / NBRC 105044 / CNB-440).